We begin with the raw amino-acid sequence, 665 residues long: Ion-translocating oxidoreductase complex subunit C (665 aa).

4Fe-4S ferredoxin-type domains are found at residues 368–398 (EYAE…QQLY) and 408–437 (KSEE…IQYF). Positions 378, 381, 384, 388, 417, 420, 423, and 427 each coordinate [4Fe-4S] cluster. 2 stretches are compositionally biased toward basic and acidic residues: residues 465-477 (QARM…ERKA) and 485-513 (ARRE…KANE). 3 disordered regions span residues 465–568 (QARM…DAKK), 580–623 (AKKL…LDPK), and 637–665 (KKLA…QIVR). Composition is skewed to polar residues over residues 554–564 (VENQEQQTQPT) and 585–600 (QTNS…QTAE). Residues 602 to 615 (EVEKTKSAVEKTEE) show a composition bias toward basic and acidic residues. Residues 643-656 (NSTSEAISNSQTAE) show a composition bias toward polar residues.

This sequence belongs to the 4Fe4S bacterial-type ferredoxin family. RnfC subfamily. As to quaternary structure, the complex is composed of six subunits: RnfA, RnfB, RnfC, RnfD, RnfE and RnfG. It depends on [4Fe-4S] cluster as a cofactor.

Its subcellular location is the cell inner membrane. Functionally, part of a membrane-bound complex that couples electron transfer with translocation of ions across the membrane. In Haemophilus influenzae (strain 86-028NP), this protein is Ion-translocating oxidoreductase complex subunit C.